Here is a 723-residue protein sequence, read N- to C-terminus: MNSKQHCNRCGKQVYPTDKVGPLKDSTFFHQGCFKCYICGTRLALKTYCNNRNDINDKEVYCSNHVPIAGPHDLPMASTNGSGKNLENNNHVKNGNWIDAGLSDMKIAHAMKATQVARPYPKISHEGAKYVVDYDTQTRLELLHRKDEDDLYESFQDKRVREAEEFEKENTEEWEKALAEFAKKYEKGQSNMKKDDLIRQLTIKREKKLETLHTKRKERERHQTAELVDRQAKEMLELFKASRSEYSNLQYPSTPPPPVPPSCSKREIYTTTDYFSSIDEVAIHCARNEVASFTDLIRTLSSGARSDVDVARAIYRWITIKNLNTMIFDDSIQNDTPMGLLRGIKYGTESYHVLFKRLCSYAGLHCVVIKGFSKSAGYQPGYSFDDHRFRNTWNAVFLDGSWRFVQCNWGARHLVNAKDGSHEAKTDGNLRYEYDDHYFMTDSEEFIYEFFPSDHAWQLLPRPLSLLQFERIPFVRSLFFKYNLSFIDNKLESTVYTDKSGAASISIRLPPKGDSLIFHYNLKFFDSEENTISGMSLKRFVMQSVTEDVVTFRVHAPSTRPLLLDIFANSVSSGAYLTGQPIKFKSVCKFKVVCESLQVIMVPLPECASGEWGPAKATRLFGLLPISHPDAIINTGRYVEIRFRMTRPLSEFVASLHRNRTDDRALQACTRSALKGDMVYIQIEFPGEGQYGLDIYTRQDDQLINGKQLLTHCCKYLIHSRNC.

One can recognise an LIM zinc-binding domain in the interval 5–72; it reads QHCNRCGKQV…SNHVPIAGPH (68 aa).

It belongs to the transglutaminase-like superfamily. Expressed in the Y and U rectal epithelial cells, in marginal cells of the terminal bulb and isthmus of the pharynx (at protein level).

The protein resides in the cytoplasm. The protein localises to the cytoskeleton. Functionally, cytoskeleton-associated protein. May play a role in hypodermal cell development. In Caenorhabditis elegans, this protein is Lim and transglutaminase domain protein ltd-1.